Reading from the N-terminus, the 709-residue chain is METKDKKEKGHMVLNSDNVFGSVSSSPTTTIQNPNYFTSFENPNFPYIFPKEEYEVMSKIESGSGKSTGSGHDPVENTAIEQEPPAAKKKRYHRHTASQIQQMEALFKENAHPDTKTRLRLSKKLGLSPIQVKFWFQNKRTQIKAQQSRSDNAKLKAENETLKTESQNIQSNFQCLFCSTCGHNLRLENARLRQELDRLRSIVSMRNPSPSQEITPETNKNNNDNMLIAEEEKAIDMELAVSCARELAKMCDINEPLWNKKRLDNESVCLNEEEYKKMFLWPLMNDDDRFRREASRANAVIMLNCITLVKAFLDADKWSEMFFPIVSSAKTAQIISSGASGPSGTLLLMFAELQVVSPLVPTREAYFLRYVEQNAEEGKWMVVDFPIDRIKPASATTTDQYRRKPSGCIIQAMRNGYSQVTWVEHVEVEEKHVQDEVVREFVESGVAFGAERWLSVLKRQCERMASLMATNITDLGVIPSVEARKNLMKLSQRMVKTFCLNIINSHGQAPTKDTVKIVSRKVCGGLVPCAVSVTLLPYSHQQVFDLLRDNQRLSQLEILFMGSSFQEVAHIANGSHLGNSISLLRINVESNSSHNVELMLQETCTDNSGSLLVYSTVDPVAVQLAMNGEDPSEIPLLPVGFSVVPVNPSDGVEGSSVSSPSCLLTVAIQVLGSNVTTERLDLSTVSVINHRICATVNRITSALVNDVGN.

The tract at residues 61-92 (ESGSGKSTGSGHDPVENTAIEQEPPAAKKKRY) is disordered. Positions 88–147 (KKKRYHRHTASQIQQMEALFKENAHPDTKTRLRLSKKLGLSPIQVKFWFQNKRTQIKAQQ) form a DNA-binding region, homeobox. Positions 137–205 (QNKRTQIKAQ…LDRLRSIVSM (69 aa)) form a coiled coil. Positions 229 to 466 (AEEEKAIDME…LKRQCERMAS (238 aa)) constitute an START domain.

This sequence belongs to the HD-ZIP homeobox family. Class IV subfamily. As to expression, expressed in flowers.

The protein resides in the nucleus. In terms of biological role, probable transcription factor. The sequence is that of Homeobox-leucine zipper protein HDG4 from Arabidopsis thaliana (Mouse-ear cress).